A 313-amino-acid chain; its full sequence is Probable GTP 3',8-cyclase (313 aa).

The region spanning 4–224 (VYGRELEDLR…EIRNKHKRPR (221 aa)) is the Radical SAM core domain. Arg-13 contributes to the GTP binding site. [4Fe-4S] cluster is bound by residues Cys-20, Cys-24, and Cys-27. Lys-60 contributes to the GTP binding site. Residue Gly-64 coordinates S-adenosyl-L-methionine. Thr-90 provides a ligand contact to GTP. Ser-114 contributes to the S-adenosyl-L-methionine binding site. Lys-151 is a binding site for GTP. The [4Fe-4S] cluster site is built by Cys-244 and Cys-247. Residue 249–251 (RIR) participates in GTP binding. Cys-261 serves as a coordination point for [4Fe-4S] cluster.

Belongs to the radical SAM superfamily. MoaA family. Requires [4Fe-4S] cluster as cofactor.

It catalyses the reaction GTP + AH2 + S-adenosyl-L-methionine = (8S)-3',8-cyclo-7,8-dihydroguanosine 5'-triphosphate + 5'-deoxyadenosine + L-methionine + A + H(+). It functions in the pathway cofactor biosynthesis; molybdopterin biosynthesis. Its function is as follows. Catalyzes the cyclization of GTP to (8S)-3',8-cyclo-7,8-dihydroguanosine 5'-triphosphate. This Sulfolobus acidocaldarius (strain ATCC 33909 / DSM 639 / JCM 8929 / NBRC 15157 / NCIMB 11770) protein is Probable GTP 3',8-cyclase.